The sequence spans 469 residues: MNPNQKITTIGSICMVIGIVSLMLQIGNIISIWVSHSIQTGNQHQAEPCNQSIITYENNTWVNQTYVNISNTNFLTEKAVASVTLAGNSSLCPISGWAVYSKDNGIRIGSKGDVFVIREPFISCSHLECRTFFLTQGALLNDKHSNGTVKDRSPHRTLMSCPVGEAPSPYNSRFESVAWSASACHDGTSWLTIGISGPDNGAVAVLKYNGIITDTIKSWRNNIMRTQESECACVNGSCFTVMTDGPSNGQASYKIFRIEKGKVVKSAELNAPNYHYEECSCYPDAGEITCVCRDNWHGSNRPWVSFNQNLEYRIGYICSGVFGDNPRPNDGTGSCGPVSPKGAYGIKGFSFKYGNGVWIGRTKSTNSRSGFEMIWDPNGWTGTDSNFSVKQDIVAITDWSGYSGSFVQHPELTGLDCIRPCFWVELIRGRPKESTIWTSGSSISFCGVNSDTVGWSWPDGAELPFTIDK.

Residues 1 to 12 (MNPNQKITTIGS) lie on the Intravirion side of the membrane. The involved in apical transport and lipid raft association stretch occupies residues 11–33 (GSICMVIGIVSLMLQIGNIISIW). Residues 13–33 (ICMVIGIVSLMLQIGNIISIW) form a helical membrane-spanning segment. Over 34 to 469 (VSHSIQTGNQ…GAELPFTIDK (436 aa)) the chain is Virion surface. The tract at residues 36–90 (HSIQTGNQHQAEPCNQSIITYENNTWVNQTYVNISNTNFLTEKAVASVTLAGNSS) is hypervariable stalk region. Asn50, Asn58, Asn63, Asn68, and Asn88 each carry an N-linked (GlcNAc...) asparagine; by host glycan. Residues 91-469 (LCPISGWAVY…GAELPFTIDK (379 aa)) form a head of neuraminidase region. 8 disulfide bridges follow: Cys92–Cys417, Cys124–Cys129, Cys184–Cys231, Cys233–Cys238, Cys279–Cys292, Cys281–Cys290, Cys318–Cys335, and Cys421–Cys446. Arg118 serves as a coordination point for substrate. Residue Asn146 is glycosylated (N-linked (GlcNAc...) asparagine; by host). Asp151 serves as the catalytic Proton donor/acceptor. Residue Arg152 participates in substrate binding. Asn235 is a glycosylation site (N-linked (GlcNAc...) asparagine; by host). 277–278 (EE) is a substrate binding site. Arg293 is a substrate binding site. The Ca(2+) site is built by Asp294, Gly298, and Asp324. Position 368 (Arg368) interacts with substrate. Asn386 carries N-linked (GlcNAc...) asparagine; by host glycosylation. The active-site Nucleophile is the Tyr402.

It belongs to the glycosyl hydrolase 34 family. As to quaternary structure, homotetramer. Ca(2+) serves as cofactor. N-glycosylated.

It localises to the virion membrane. Its subcellular location is the host apical cell membrane. It catalyses the reaction Hydrolysis of alpha-(2-&gt;3)-, alpha-(2-&gt;6)-, alpha-(2-&gt;8)- glycosidic linkages of terminal sialic acid residues in oligosaccharides, glycoproteins, glycolipids, colominic acid and synthetic substrates.. With respect to regulation, inhibited by the neuraminidase inhibitors zanamivir (Relenza) and oseltamivir (Tamiflu). These drugs interfere with the release of progeny virus from infected cells and are effective against all influenza strains. Resistance to neuraminidase inhibitors is quite rare. In terms of biological role, catalyzes the removal of terminal sialic acid residues from viral and cellular glycoconjugates. Cleaves off the terminal sialic acids on the glycosylated HA during virus budding to facilitate virus release. Additionally helps virus spread through the circulation by further removing sialic acids from the cell surface. These cleavages prevent self-aggregation and ensure the efficient spread of the progeny virus from cell to cell. Otherwise, infection would be limited to one round of replication. Described as a receptor-destroying enzyme because it cleaves a terminal sialic acid from the cellular receptors. May facilitate viral invasion of the upper airways by cleaving the sialic acid moieties on the mucin of the airway epithelial cells. Likely to plays a role in the budding process through its association with lipid rafts during intracellular transport. May additionally display a raft-association independent effect on budding. Plays a role in the determination of host range restriction on replication and virulence. Sialidase activity in late endosome/lysosome traffic seems to enhance virus replication. In Influenza A virus (strain A/Hong Kong/212/2003 H5N1 genotype Z+), this protein is Neuraminidase.